The sequence spans 469 residues: Transcription factor phomD' (469 aa).

The segment at residues 14–41 is a DNA-binding region (zn(2)-C6 fungal-type); sequence CNACNESKVRCSQRKPTCARCERNGVEC. Residues 49 to 118 are disordered; the sequence is THKDAPPISM…QQKDEAAAAA (70 aa). Residues 82–93 show a composition bias toward polar residues; sequence KANSNSSSNWHM. The segment covering 104–118 has biased composition (low complexity); it reads QQQQQQQKDEAAAAA.

Its subcellular location is the nucleus. Transcription factor; part of the gene cluster that mediates the biosynthesis of the phomopsins, a group of hexapeptide mycotoxins which infects lupins and causes lupinosis disease in livestock. May play a role in the regulation of the production of phomopsins. This chain is Transcription factor phomD', found in Diaporthe leptostromiformis (Lupinosis disease fungus).